Consider the following 464-residue polypeptide: Soluble pyridine nucleotide transhydrogenase (464 aa).

FAD is bound at residue 35 to 44 (DNRPLVGGNC).

It belongs to the class-I pyridine nucleotide-disulfide oxidoreductase family. The cofactor is FAD.

Its subcellular location is the cytoplasm. The catalysed reaction is NAD(+) + NADPH = NADH + NADP(+). Its function is as follows. Conversion of NADPH, generated by peripheral catabolic pathways, to NADH, which can enter the respiratory chain for energy generation. In Stutzerimonas stutzeri (strain A1501) (Pseudomonas stutzeri), this protein is Soluble pyridine nucleotide transhydrogenase.